Reading from the N-terminus, the 445-residue chain is 3-phosphoshikimate 1-carboxyvinyltransferase (445 aa).

The disordered stretch occupies residues 1–25; the sequence is MTDSNQPTPLQARKSGALHGTARVP. 3-phosphoshikimate contacts are provided by Lys-28, Ser-29, and Arg-33. Residue Lys-28 participates in phosphoenolpyruvate binding. Residues Gly-101 and Arg-129 each coordinate phosphoenolpyruvate. Residues Ser-175, Gln-177, Asp-328, and Lys-355 each coordinate 3-phosphoshikimate. Gln-177 contacts phosphoenolpyruvate. Asp-328 serves as the catalytic Proton acceptor. Residues Arg-359 and Arg-402 each coordinate phosphoenolpyruvate.

Belongs to the EPSP synthase family. In terms of assembly, monomer.

The protein localises to the cytoplasm. The catalysed reaction is 3-phosphoshikimate + phosphoenolpyruvate = 5-O-(1-carboxyvinyl)-3-phosphoshikimate + phosphate. Its pathway is metabolic intermediate biosynthesis; chorismate biosynthesis; chorismate from D-erythrose 4-phosphate and phosphoenolpyruvate: step 6/7. In terms of biological role, catalyzes the transfer of the enolpyruvyl moiety of phosphoenolpyruvate (PEP) to the 5-hydroxyl of shikimate-3-phosphate (S3P) to produce enolpyruvyl shikimate-3-phosphate and inorganic phosphate. The protein is 3-phosphoshikimate 1-carboxyvinyltransferase of Rhodopseudomonas palustris (strain TIE-1).